The following is a 244-amino-acid chain: Phosphoadenosine 5'-phosphosulfate reductase (244 aa).

Cys239 acts as the Nucleophile; cysteine thiosulfonate intermediate in catalysis.

Belongs to the PAPS reductase family. CysH subfamily.

It is found in the cytoplasm. The catalysed reaction is [thioredoxin]-disulfide + sulfite + adenosine 3',5'-bisphosphate + 2 H(+) = [thioredoxin]-dithiol + 3'-phosphoadenylyl sulfate. It functions in the pathway sulfur metabolism; hydrogen sulfide biosynthesis; sulfite from sulfate: step 3/3. Functionally, catalyzes the formation of sulfite from phosphoadenosine 5'-phosphosulfate (PAPS) using thioredoxin as an electron donor. This is Phosphoadenosine 5'-phosphosulfate reductase from Shigella flexneri.